We begin with the raw amino-acid sequence, 462 residues long: L-seryl-tRNA(Sec) selenium transferase (462 aa).

Lys-292 carries the post-translational modification N6-(pyridoxal phosphate)lysine.

Belongs to the SelA family. It depends on pyridoxal 5'-phosphate as a cofactor.

The protein resides in the cytoplasm. It catalyses the reaction L-seryl-tRNA(Sec) + selenophosphate + H(+) = L-selenocysteinyl-tRNA(Sec) + phosphate. It participates in aminoacyl-tRNA biosynthesis; selenocysteinyl-tRNA(Sec) biosynthesis; selenocysteinyl-tRNA(Sec) from L-seryl-tRNA(Sec) (bacterial route): step 1/1. Converts seryl-tRNA(Sec) to selenocysteinyl-tRNA(Sec) required for selenoprotein biosynthesis. The chain is L-seryl-tRNA(Sec) selenium transferase from Clostridium perfringens (strain ATCC 13124 / DSM 756 / JCM 1290 / NCIMB 6125 / NCTC 8237 / Type A).